We begin with the raw amino-acid sequence, 123 residues long: Transmembrane protein 254 (123 aa).

3 helical membrane-spanning segments follow: residues 15-35 (LFWF…VFWP), 63-83 (NGYW…LVLC), and 95-115 (LLWF…LIAY).

The protein resides in the membrane. In Mus musculus (Mouse), this protein is Transmembrane protein 254.